The primary structure comprises 40 residues: GCIPSFGECAWFSGESCCTGICKWVFFTSKFMCRRVWGKD.

3 disulfide bridges follow: Cys-2–Cys-18, Cys-9–Cys-22, and Cys-17–Cys-33.

The protein belongs to the neurotoxin 19 (CSTX) family. Post-translationally, contains 3 disulfide bonds. As to expression, expressed by the venom gland.

The protein resides in the secreted. Its function is as follows. Blocks the Nav1.2/SCN2A, Nav1.4/SCN4A, Nav1.5/SCN5A and Nav1.6/SCN8A sodium channels. Shows a slight preference for the Nav1.2 and Nav1.4 channels. Reduces the peak amplitude of the sodium current and negatively shifts the steady-state inactivation process. Does not shift the threshold potential of activation or the voltage corresponding to maximal current. Does not change the reversal potential of the sodium current. May act on site 1 of the receptor. The chain is Mu-thomitoxin-Hme1b from Heriaeus mellotteei (Crab spider).